Here is a 213-residue protein sequence, read N- to C-terminus: Thiopurine S-methyltransferase (213 aa).

Positions 10, 45, 66, and 121 each coordinate S-adenosyl-L-methionine.

This sequence belongs to the class I-like SAM-binding methyltransferase superfamily. TPMT family.

The protein localises to the cytoplasm. The enzyme catalyses S-adenosyl-L-methionine + a thiopurine = S-adenosyl-L-homocysteine + a thiopurine S-methylether.. This Aliivibrio fischeri (strain MJ11) (Vibrio fischeri) protein is Thiopurine S-methyltransferase.